The sequence spans 145 residues: Antimicrobial peptide NK-lysin (145 aa).

The first 22 residues, 1–22, serve as a signal peptide directing secretion; sequence MTSRALLLLASALLGTPGLTFS. A propeptide spanning residues 23–62 is cleaved from the precursor; sequence GLNPESYDLATAHLSDGEQFCQGLTQEDLQGDLLTERERQ. Positions 62–142 constitute a Saposin B-type domain; the sequence is QGIACWSCRK…VDIKLCKHKA (81 aa). 3 cysteine pairs are disulfide-bonded: Cys66–Cys138, Cys69–Cys132, and Cys97–Cys107. The propeptide occupies 141 to 145; sequence KAGLI.

It localises to the secreted. May be an effector molecule of cytotoxic activity. Has antimicrobial activity. The polypeptide is Antimicrobial peptide NK-lysin (NKL) (Equus caballus (Horse)).